Consider the following 107-residue polypeptide: Small ribosomal subunit protein uS17 (107 aa).

It belongs to the universal ribosomal protein uS17 family. Part of the 30S ribosomal subunit.

One of the primary rRNA binding proteins, it binds specifically to the 5'-end of 16S ribosomal RNA. In Nitrosopumilus maritimus (strain SCM1), this protein is Small ribosomal subunit protein uS17.